A 281-amino-acid polypeptide reads, in one-letter code: Thioesterase PikA5 (281 aa).

Residues 26 to 249 form a thioesterase region; that stretch reads RLVCLPHAGG…WHEICNDISD (224 aa). The active-site Nucleophile; for thioesterase activity is the Ser99. His233 functions as the Proton acceptor; for thioesterase activity in the catalytic mechanism.

This sequence belongs to the thioesterase family.

It functions in the pathway antibiotic biosynthesis. In terms of biological role, involved in the biosynthesis of 12- and 14-membered ring macrolactone antibiotics such as methymycin, neomethymycin, narbomycin and pikromycin. Responsible for removing mis-formed acyl moieties (aberrant decarboxylation) that are bound to the PKS and could block it. Catalyzes the cleavage of methylmalonyl-[acp]. It exhibits some acyl-group specificity, and catalyzes the cleavage of propionyl and butyryl derivatives faster than acetyl malonyl or methylmalonyl derivatives. The sequence is that of Thioesterase PikA5 from Streptomyces venezuelae.